Reading from the N-terminus, the 450-residue chain is Chromosomal replication initiator protein DnaA (450 aa).

Residues 1–73 (MNTKELWIEV…KNILKKLTGI (73 aa)) form a domain I, interacts with DnaA modulators region. The segment at 73 to 104 (IQYNISFELEKNINKQASVISKIDTLTENNNL) is domain II. A domain III, AAA+ region region spans residues 105–326 (AYYENYTFEN…GAIKRLLFLA (222 aa)). ATP contacts are provided by glycine 149, glycine 151, lysine 152, and threonine 153. The domain IV, binds dsDNA stretch occupies residues 327 to 450 (VMNKKPNEII…NAIRRKIEGR (124 aa)).

Belongs to the DnaA family. As to quaternary structure, oligomerizes as a right-handed, spiral filament on DNA at oriC.

The protein resides in the cytoplasm. Plays an essential role in the initiation and regulation of chromosomal replication. ATP-DnaA binds to the origin of replication (oriC) to initiate formation of the DNA replication initiation complex once per cell cycle. Binds the DnaA box (a 9 base pair repeat at the origin) and separates the double-stranded (ds)DNA. Forms a right-handed helical filament on oriC DNA; dsDNA binds to the exterior of the filament while single-stranded (ss)DNA is stabiized in the filament's interior. The ATP-DnaA-oriC complex binds and stabilizes one strand of the AT-rich DNA unwinding element (DUE), permitting loading of DNA polymerase. After initiation quickly degrades to an ADP-DnaA complex that is not apt for DNA replication. Binds acidic phospholipids. The sequence is that of Chromosomal replication initiator protein DnaA from Spiroplasma citri.